Reading from the N-terminus, the 451-residue chain is Probable glycine dehydrogenase (decarboxylating) subunit 1 (451 aa).

Belongs to the GcvP family. N-terminal subunit subfamily. The glycine cleavage system is composed of four proteins: P, T, L and H. In this organism, the P 'protein' is a heterodimer of two subunits.

It carries out the reaction N(6)-[(R)-lipoyl]-L-lysyl-[glycine-cleavage complex H protein] + glycine + H(+) = N(6)-[(R)-S(8)-aminomethyldihydrolipoyl]-L-lysyl-[glycine-cleavage complex H protein] + CO2. The glycine cleavage system catalyzes the degradation of glycine. The P protein binds the alpha-amino group of glycine through its pyridoxal phosphate cofactor; CO(2) is released and the remaining methylamine moiety is then transferred to the lipoamide cofactor of the H protein. In Thermococcus kodakarensis (strain ATCC BAA-918 / JCM 12380 / KOD1) (Pyrococcus kodakaraensis (strain KOD1)), this protein is Probable glycine dehydrogenase (decarboxylating) subunit 1.